The sequence spans 283 residues: MAQSTALTICGLVYSPAIGQELVRLHTSDIDELVYFSSEREFCNYLEARRNSIACLILEWGEGTPQIITYLHHSATLLPAILIFPAAPAPPPAGPHYHIAEVILTTDQLDQLNRQIEEAITGFVKLCPGCAVPPHVLFRLPALKESSNVDPQHRLSQKLKERLGYLGVYYKRDTAFFFRRMSPADKRKLLDELRSIYRTIVLEYFNTDAKVNERIDEFVSKAFFADISVSQVLEIHVELMDTFSKQLKLEGRSEDILLDYRLTLIDVIAHLCEMYRRSIPREV.

The tract at residues 1–146 is psR domain, not required to form KaiA:KaiB:KaiC complex, or for a full KaiC phosphorylation cycle; that stretch reads MAQSTALTIC…LFRLPALKES (146 aa). One can recognise a KaiA N-terminal domain in the interval 3-163; the sequence is QSTALTICGL…RLSQKLKERL (161 aa). Residues 164 to 172 form a flexible linker region; the sequence is GYLGVYYKR. The KaiA C-terminal domain maps to 173-281; it reads DTAFFFRRMS…CEMYRRSIPR (109 aa).

Belongs to the KaiA family. Homodimer. The KaiABC complex composition changes during the circadian cycle to control KaiC phosphorylation. Complexes KaiC(6), KaiA(2-4):KaiC(6), KaiB(6):KaiC(6) and KaiC(6):KaiB(6):KaiA(12) are among the most important forms, many form cooperatively. Binds to KaiB and KaiC, the N-terminus (pseudoreceiver domain PsR) is not required for either interaction. 1 KaiB binds to one subunit of the KaiA homodimer. KaiA and CikA bind to the same region of the KaiB(fs) form and therefore compete.

Its function is as follows. Key component of the KaiABC oscillator complex, which constitutes the main circadian regulator in cyanobacteria. Complex composition changes during the circadian cycle to control KaiC phosphorylation. KaiA stimulates KaiC autophosphorylation, while KaiB sequesters KaiA, leading to KaiC autodephosphorylation. KaiA binding to the KaiC CII domain during the subjective day yields KaiA(2-4):KaiC(6) complexes which stimulate KaiC autophosphorylation. Phospho-Ser-431 KaiC accumulation triggers binding of KaiB during the subjective night to form the KaiB(6):KaiC(6) complex, leading to changes in the output regulators CikA and SasA. KaiB(6):KaiC(6) formation exposes a site for KaiA binding on KaiB that sequesters KaiA from KaiC's CII domain, making the KaiC(6):KaiB(6):KaiA(12) complex resulting in KaiC autodephosphorylation. Complete dephosphorylation of KaiC leads to dissociation of KaiA(2):KaiB(1), completing 1 cycle of the Kai oscillator. Formation of the KaiB:KaiC complex is promoted by KaiA, helping switch KaiC from its autophosphorylation to autodephosphatase function. In terms of biological role, binds oxidized quinones via the N-terminal PsR domain, allowing it to sense redox changes and possibly mediate clock input. The sequence is that of Circadian clock oscillator protein KaiA from Thermosynechococcus vestitus (strain NIES-2133 / IAM M-273 / BP-1).